Here is a 580-residue protein sequence, read N- to C-terminus: Proline--tRNA ligase (580 aa).

Belongs to the class-II aminoacyl-tRNA synthetase family. ProS type 1 subfamily. Homodimer.

The protein resides in the cytoplasm. The enzyme catalyses tRNA(Pro) + L-proline + ATP = L-prolyl-tRNA(Pro) + AMP + diphosphate. Functionally, catalyzes the attachment of proline to tRNA(Pro) in a two-step reaction: proline is first activated by ATP to form Pro-AMP and then transferred to the acceptor end of tRNA(Pro). As ProRS can inadvertently accommodate and process non-cognate amino acids such as alanine and cysteine, to avoid such errors it has two additional distinct editing activities against alanine. One activity is designated as 'pretransfer' editing and involves the tRNA(Pro)-independent hydrolysis of activated Ala-AMP. The other activity is designated 'posttransfer' editing and involves deacylation of mischarged Ala-tRNA(Pro). The misacylated Cys-tRNA(Pro) is not edited by ProRS. In Albidiferax ferrireducens (strain ATCC BAA-621 / DSM 15236 / T118) (Rhodoferax ferrireducens), this protein is Proline--tRNA ligase.